The chain runs to 441 residues: Glutamate-1-semialdehyde 2,1-aminomutase (441 aa).

Lys-275 is modified (N6-(pyridoxal phosphate)lysine).

The protein belongs to the class-III pyridoxal-phosphate-dependent aminotransferase family. HemL subfamily. In terms of assembly, homodimer. Requires pyridoxal 5'-phosphate as cofactor.

The protein localises to the cytoplasm. It catalyses the reaction (S)-4-amino-5-oxopentanoate = 5-aminolevulinate. The protein operates within porphyrin-containing compound metabolism; protoporphyrin-IX biosynthesis; 5-aminolevulinate from L-glutamyl-tRNA(Glu): step 2/2. The polypeptide is Glutamate-1-semialdehyde 2,1-aminomutase (Deinococcus deserti (strain DSM 17065 / CIP 109153 / LMG 22923 / VCD115)).